Consider the following 419-residue polypeptide: Methionine aminopeptidase 2 (419 aa).

A disordered region spans residues 1–69 (MSTNSSNPNE…KITAIDNSYP (69 aa)). The segment covering 11 to 29 (VMEKVQDLKIDDSKPKVDS) has biased composition (basic and acidic residues). A compositionally biased stretch (acidic residues) spans 30–41 (EEQPEAESDGES). Over residues 48–61 (KKKKKKKSKKKKKI) the composition is skewed to basic residues. His-172 contributes to the substrate binding site. Residues Asp-192, Asp-203, and His-272 each coordinate a divalent metal cation. His-280 contacts substrate. A divalent metal cation contacts are provided by Glu-305 and Glu-400.

This sequence belongs to the peptidase M24A family. Methionine aminopeptidase eukaryotic type 2 subfamily. Co(2+) is required as a cofactor. Requires Zn(2+) as cofactor. The cofactor is Mn(2+). Fe(2+) serves as cofactor.

It is found in the cytoplasm. The enzyme catalyses Release of N-terminal amino acids, preferentially methionine, from peptides and arylamides.. Functionally, cotranslationally removes the N-terminal methionine from nascent proteins. The N-terminal methionine is often cleaved when the second residue in the primary sequence is small and uncharged (Met-Ala-, Cys, Gly, Pro, Ser, Thr, or Val). This is Methionine aminopeptidase 2 from Debaryomyces hansenii (strain ATCC 36239 / CBS 767 / BCRC 21394 / JCM 1990 / NBRC 0083 / IGC 2968) (Yeast).